The sequence spans 218 residues: Ependymin (218 aa).

Positions 1–20 (MHTVKLLCVVFSCLCAVAWG) are cleaved as a signal peptide. N-linked (GlcNAc...) asparagine glycosylation is found at Asn74 and Asn97.

The protein belongs to the ependymin family. Forms disulfide-linked dimers. Post-translationally, binds calcium through the terminal sialic acids.

It localises to the secreted. Functionally, may play a role in neural plasticity. May be involved during axon regeneration. The polypeptide is Ependymin (epd) (Devario aequipinnatus (Giant danio)).